Consider the following 185-residue polypeptide: Ribosome-recycling factor (185 aa).

The protein belongs to the RRF family.

It is found in the cytoplasm. In terms of biological role, responsible for the release of ribosomes from messenger RNA at the termination of protein biosynthesis. May increase the efficiency of translation by recycling ribosomes from one round of translation to another. This Baumannia cicadellinicola subsp. Homalodisca coagulata protein is Ribosome-recycling factor.